A 156-amino-acid chain; its full sequence is Small ribosomal subunit protein uS7 (156 aa).

Belongs to the universal ribosomal protein uS7 family. Part of the 30S ribosomal subunit. Contacts proteins S9 and S11.

In terms of biological role, one of the primary rRNA binding proteins, it binds directly to 16S rRNA where it nucleates assembly of the head domain of the 30S subunit. Is located at the subunit interface close to the decoding center, probably blocks exit of the E-site tRNA. This is Small ribosomal subunit protein uS7 from Roseobacter denitrificans (strain ATCC 33942 / OCh 114) (Erythrobacter sp. (strain OCh 114)).